Consider the following 392-residue polypeptide: Nicotinate phosphoribosyltransferase (392 aa).

The residue at position 214 (histidine 214) is a Phosphohistidine; by autocatalysis.

The protein belongs to the NAPRTase family. Transiently phosphorylated on a His residue during the reaction cycle. Phosphorylation strongly increases the affinity for substrates and increases the rate of nicotinate D-ribonucleotide production. Dephosphorylation regenerates the low-affinity form of the enzyme, leading to product release.

The catalysed reaction is nicotinate + 5-phospho-alpha-D-ribose 1-diphosphate + ATP + H2O = nicotinate beta-D-ribonucleotide + ADP + phosphate + diphosphate. Its pathway is cofactor biosynthesis; NAD(+) biosynthesis; nicotinate D-ribonucleotide from nicotinate: step 1/1. Catalyzes the synthesis of beta-nicotinate D-ribonucleotide from nicotinate and 5-phospho-D-ribose 1-phosphate at the expense of ATP. The polypeptide is Nicotinate phosphoribosyltransferase (Xanthomonas euvesicatoria pv. vesicatoria (strain 85-10) (Xanthomonas campestris pv. vesicatoria)).